Reading from the N-terminus, the 57-residue chain is Large ribosomal subunit protein bL32 (57 aa).

Residues 1–16 (MAVQKSRKTPSRRGMR) are compositionally biased toward basic residues. The interval 1-37 (MAVQKSRKTPSRRGMRRSHDALSTTAITVDETTGELH) is disordered. Over residues 21-31 (ALSTTAITVDE) the composition is skewed to polar residues.

It belongs to the bacterial ribosomal protein bL32 family.

The polypeptide is Large ribosomal subunit protein bL32 (Hydrogenovibrio crunogenus (strain DSM 25203 / XCL-2) (Thiomicrospira crunogena)).